The sequence spans 866 residues: MHEQYQPRDIEVAAQQKWEKTAAFKAVEDASRPKYYCLSMFPYPSGKLHMGHVRNYTIGDVLSRYMALKGYNVLQPMGWDAFGMPAENAALKNQVAPAAWTYSNIEYMKTQLKSLGFAIDWEREVTTCKPDYYRWEQWLFTRLFEKGVIYRKNGVVNWDPVDQTVLANEQVIDGRGWRSGALVEKREIPMYYFGITQYADELLADLDTLDWPPQVATMQRNWIGKSFGADVRFAYDEASIGSAGELTVYTTRPDTLMGATYVAVAAEHPLATQAAANDPALQAFIAKCKAGSVAEADMATMEKEGMPTGLFVVHPLTGAKLPVWVANYVLMSYGSGAVMAVPAHDERDFAFANKYALPIQQVIALKEGDATFDASTWQDWYATKDDSTRLVNSGKYDGLDFQGAFDAIVADLAAKAAGEKKTQYRLRDWGISRQRYWGCPIPIIHCDSCGDVPVPADQLPVVLPENVVPDGSGNPLAKMPEFYETTCPCCGKPARRETDTMDTFVESSWYFARYASPDCATGMVDDRARYWLNVDQYIGGIEHAILHLLYARFFNKLMRDEGLLANDEPFQRLLTQGMVVCETFYRDLDNGSKEWITPADVVIERDGKGKIIAATHKADGLPVVVGGIEKMSKSKNNGVDPQALIEQYGADTARLFMMFAAPPSQSLEWSDAGVEGAYRFLKRLYKIVSEYVAGGVAERFVAGELTADEKALRLKLHTTIQKVSDDFGVRQQFNTAIAAVMELLNLFDRTEASRAVRQEVLESVVVLLSPIVPHICETLWSALKPGSELLAQRWPEVDPAALVQDEIELVVQVNGKLRGSVRVAADAGRDVIEAAALAHEQVRKFMDGQPAKKVIVVPGRLVNIVV.

The 'HIGH' region signature appears at 42 to 52; that stretch reads PYPSGKLHMGH. The 'KMSKS' region signature appears at 630–634; the sequence is KMSKS. K633 is an ATP binding site.

The protein belongs to the class-I aminoacyl-tRNA synthetase family.

It is found in the cytoplasm. It catalyses the reaction tRNA(Leu) + L-leucine + ATP = L-leucyl-tRNA(Leu) + AMP + diphosphate. This Laribacter hongkongensis (strain HLHK9) protein is Leucine--tRNA ligase.